We begin with the raw amino-acid sequence, 255 residues long: Pimeloyl-[acyl-carrier protein] methyl ester esterase (255 aa).

Residues tryptophan 18, 78–79 (SL), and 139–143 (FLALD) each bind substrate. Serine 78 (nucleophile) is an active-site residue. Residues aspartate 203 and histidine 233 contribute to the active site. Substrate is bound at residue histidine 233.

Belongs to the AB hydrolase superfamily. Carboxylesterase BioH family. As to quaternary structure, monomer.

It localises to the cytoplasm. It carries out the reaction 6-carboxyhexanoyl-[ACP] methyl ester + H2O = 6-carboxyhexanoyl-[ACP] + methanol + H(+). Its pathway is cofactor biosynthesis; biotin biosynthesis. Its function is as follows. The physiological role of BioH is to remove the methyl group introduced by BioC when the pimeloyl moiety is complete. It allows to synthesize pimeloyl-ACP via the fatty acid synthetic pathway through the hydrolysis of the ester bonds of pimeloyl-ACP esters. The protein is Pimeloyl-[acyl-carrier protein] methyl ester esterase of Xylella fastidiosa (strain M12).